A 209-amino-acid chain; its full sequence is Yop proteins translocation protein K (209 aa).

In terms of biological role, belongs to an operon involved in the translocation of Yop proteins across the bacterial membranes or in the specific control of this function. The sequence is that of Yop proteins translocation protein K (yscK) from Yersinia pseudotuberculosis serotype I (strain IP32953).